Reading from the N-terminus, the 360-residue chain is 3-isopropylmalate dehydrogenase (360 aa).

Gly-76–Glu-89 lines the NAD(+) pocket. Positions 96, 106, 134, and 224 each coordinate substrate. 3 residues coordinate Mg(2+): Asp-224, Asp-248, and Asp-252. Gly-282–Asn-294 serves as a coordination point for NAD(+).

This sequence belongs to the isocitrate and isopropylmalate dehydrogenases family. LeuB type 1 subfamily. In terms of assembly, homodimer. Mg(2+) serves as cofactor. The cofactor is Mn(2+).

It is found in the cytoplasm. The enzyme catalyses (2R,3S)-3-isopropylmalate + NAD(+) = 4-methyl-2-oxopentanoate + CO2 + NADH. Its pathway is amino-acid biosynthesis; L-leucine biosynthesis; L-leucine from 3-methyl-2-oxobutanoate: step 3/4. Catalyzes the oxidation of 3-carboxy-2-hydroxy-4-methylpentanoate (3-isopropylmalate) to 3-carboxy-4-methyl-2-oxopentanoate. The product decarboxylates to 4-methyl-2 oxopentanoate. The chain is 3-isopropylmalate dehydrogenase from Pseudomonas fluorescens (strain ATCC BAA-477 / NRRL B-23932 / Pf-5).